We begin with the raw amino-acid sequence, 2475 residues long: MGNRGSSTSSRPPLSSEANLYAKLQDHIQRQTRPFSGGGYFNGGGDKNPVQHIKDYHIDSVSSKAKLRIIEGIIKAISKIGFKVDTKQPIEDILKDIKKQLPDPRAGSTFVKNAEKQETICKMIADAINQEFIDLGQDKLIDTTEGAASICRQIVLYINSLTHGLRAEYLDVHGSIENTLENIKLLSDAIKQLHERMVTEVTKAAPNEEVINAVTMIEAVYRRLLNEQNLQINILTNFIDNILTPTQKELDKLKTDEVDIIKILNDTNSVLGTKNFGKVLSYTLCNLGIAATVANKINKALQRVGLKVEQYLHSKNWAEFDKELDLKRFSGLVSAENIAEFEKAVNLLRQTFNERHKILENNCAKKGGDGEKTPLDKRMEAQRLDRKHILMEFLNKSTQAYNDFLENVKKIGMKLVKEIALTPNITKLRDALSRINDMGTIALDLSLIGFYNNAAAREERETFLIQLTLVKNVLEELAKTDPNFKNLYDSCFRLLQIIDFYTDIVQKKYGGGEDCECTKVGGAALTVEELGLSKAARSQVDLNQAINTFMYYYYVAQIYSNLTHNKQEFQSYEENYATILGDAIAGRLMQLDTEKNARINSPAVDLARGHVGPNPGGAQEVDWKATISAIELEYDVKRRFYRALEGLDLYLKNITKTFVNNIDSIQTVQQMLDGVRIIGRWFTEATGDTLAQVFESFPTSAGNDSNVFTDNAPAGHYYEKVAAEIQQGRGVGTLRPVRASQAKNIRDLIGRSLSNFQALKNIINAFARIGDMLGGEELRQTVPMSPLQIYKTLLEYIQHSALSVGLKNLNQTQIGGQRVALAQTAEEASQRVYLSTVRVNDALSTRWETEDVFFTFMLKSMAAKIFIVLGIYDMFERPEPVYKLIPTRMILGGADELEPEVIPEAAGLYFRLPRLAEFYQKLFSFRDENVQISMLPELEGIFSGLIRVIFMRPIELINIGDYSETEIRQLIKEINVIYQHFNLEYGEQEAVKKALIHFVNEINRRFGVITRTEWEKFQRIVQEARTMNDFGMMNQTNYSILPDEDGYTQSSQLLPSDRFIGPSSQPTPKWRPALYNIDSVDVQTGMLQPNSQWDLVQKFRKQLSEMFEDPSLQQELGKVSYQELIQQATNELKKEHTDKIQIVSKLIQGSESLADTDVNKIFLFHETVITGLNLLSAIYVLLNTFRNNIKALDLDTIQKSIIEWLRETQAANVNRANLIDWLGRRHGDISEIRNPGLVIKANDARLSEVYPDPTTDATAPLDRNLVTETLFAWFTRFVGIPADGAVRPEQELAARYLVDNQRIMQLLLTNIFEMTSSFNKLVQVRFPETSTAHVHLDFTGLISLIDSLMADTKYFLDLLRPHIDKNIIQYYENRSNPGSFYWLEEHLIDKLIKPPTDAGGRPLPGGELGLEGVNQIINKTYILLTKPYNVLQLRGGAQRGNAANIQINNNPEFSERYEQYGRVFSRLVFYDALIENSGLRVEQVALGDFRLSNLIRTNNAQEENALSFWTAVAPRAYANVNDAANNLRRYRLYGSDYGIRNNRSMMMVFNQLVASYIARFYDAPSGKIYLNLINTFANGNFSQAVMELGYAHPDLARDNTAFGHRGDPTEQSVLLLSLGLMLQRLIKDTNRQGLSQHLISTLTEIPIYLKENYRANLPLFNKMFNILISQGELLKQFIQYTKVQLARPNLTALLGANNDSIIYYNNNNVPNTGLTVGQAALRGIGSVFRPDITLMPLGNAQNNTNDVVRKRLIAVINGIIRGSLTLANSAMEVLHELTDHPIYFETEEHFIQNYMSRYNKEPLMPFSLSLYYLRDLRIENNEVYDPLLYPNLESGSPEFKILYGTRKLLGNDPVQLSDMPGVQLIMKNYNETVVAREQITPTRFEHFYIHAIQALRFIINIRSFKTVMTYNENTFGGVNLIGEDRDDKPIITEGIGMNAVYSLRKTLQDVISFVESSYQEEQINNIHKIVSPRSQTRSLGSNRERERIFNLFDMNIMPINVNALMRSIPLANIYNYDYSFEEIACLMYGISAEKVRSLDTAAPQPDVAQVLNIPNRPPMNTREFMLKLLINPYVTVSITQYGNELLFRGNAGYMSRIFRGDNALNMGRPKFLSDQIFNKVLFGSLYPTQFDYDEAGPGLAAGIQRGREQWGQPLSDYINQALHELVRTIRIIPQNIRVLRNIMVKNQLIADLAAIREQLVRMRREVENMVQTPEIQNNPTPEVIAAAQTWTQQYRARVDFLINFIGNAQQPNSLIQLIQNITPLTVRAQLTTVFIRHGLPVPDPDQALQTDDEATQWFMTNIINQPITMIIPFTDLADDLRIFLETMERYVFNVPRWLGPSTGRVARVPVNMAPGNIRYRTSYTENNVLTYIAEQNQEEGPWSIVKQVGVGIQKPALIQIGKDRFDTRLIRNLIFITNIQRLLRLRLNLELSQFRNVLVSPNHIINPSITEYGFSITGPSETFSDKQYDSDIRIL.

Residue glycine 2 is the site of N-myristoyl glycine; by host attachment. Residues 2185–2212 (KNQLIADLAAIREQLVRMRREVENMVQT) adopt a coiled-coil conformation.

Belongs to the asfivirus polyprotein pp220 family. Post-translationally, the polyprotein is not glycosylated. Specific enzymatic cleavages in vivo by the viral pS273R protease yield mature proteins.

The protein resides in the host cytoplasm. It localises to the host perinuclear region. The protein localises to the virion. It is found in the host nucleus. In terms of biological role, essential for the core assembly. Its myristoyl moiety may function as a membrane-anchoring signal to bind the developing core shell to the inner viral envelope. Functionally, the structural protein p34 is a component of the virus core shell. The structural protein p14 is a component of the virus core shell. Its function is as follows. The structural protein p37 is a component of the virus core shell. In terms of biological role, the structural protein p150 is a component of the virus core shell. The protein is Polyprotein pp220 of African swine fever virus (isolate Pig/Kenya/KEN-50/1950) (ASFV).